Consider the following 454-residue polypeptide: Cholesterol 7-desaturase nvd (454 aa).

A run of 2 helical transmembrane segments spans residues valine 13–glycine 33 and threonine 47–tryptophan 67. In terms of domain architecture, Rieske spans tryptophan 117–valine 221. Residues cysteine 158, histidine 160, cysteine 178, and histidine 181 each coordinate [2Fe-2S] cluster.

The protein belongs to the cholesterol 7-desaturase family. [2Fe-2S] cluster is required as a cofactor.

The protein localises to the membrane. It catalyses the reaction cholesterol + NADPH + O2 + H(+) = 7-dehydrocholesterol + NADP(+) + 2 H2O. The enzyme catalyses cholesterol + NADH + O2 + H(+) = 7-dehydrocholesterol + NAD(+) + 2 H2O. The protein operates within steroid hormone biosynthesis; dafachronic acid biosynthesis. In terms of biological role, catalyzes the production of 7-dehydrocholesterol (7-DHC or cholesta-5,7-dien-3beta-ol) by inserting a double bond (desaturating) at the C7-C8 single bond of cholesterol. This reaction is the first step in the synthesis of the steroid hormone Delta(7)-dafachronic acid. The polypeptide is Cholesterol 7-desaturase nvd (nvd) (Xenopus laevis (African clawed frog)).